The sequence spans 488 residues: G-patch domain and KOW motifs-containing protein (488 aa).

A compositionally biased stretch (pro residues) spans 1–11; it reads MAGRESPPPSA. The disordered stretch occupies residues 1–20; that stretch reads MAGRESPPPSAPSMAPISFG. Ala2 is modified (N-acetylalanine). The residue at position 25 (Ser25) is a Phosphoserine; by PKA. The segment at 72–97 is disordered; sequence IQNGSRRQPLSKNPKPSSETSTVLMS. Over residues 73-95 the composition is skewed to polar residues; that stretch reads QNGSRRQPLSKNPKPSSETSTVL. The residue at position 115 (Ser115) is a Phosphoserine. The G-patch domain maps to 164 to 210; that stretch reads VEAYGLAMLRGMGWKPGKGIGNTFSQVVKPRVNSIRPKGLGLGANRM. Disordered regions lie at residues 216–241 and 295–367; these read ASVG…PQGL and QEFD…PRNK. A compositionally biased stretch (basic and acidic residues) spans 224-236; it reads PRPDGDRENDKEG. A KOW 1 domain is found at 231–258; that stretch reads ENDKEGQPQGLMHGRAVVVLSGPYRGLY. The span at 307-331 shows a compositional bias: polar residues; it reads VSQTSTEQQNRATGTASSLKAAQNQ. Composition is skewed to basic and acidic residues over residues 332–341 and 349–363; these read EDSKRRQKGS and PDRQ…EKAA. The region spanning 401-428 is the KOW 2 domain; it reads PDTCVCRTDEGRVLEDVREDMLETLIPK. The residue at position 485 (Ser485) is a Phosphoserine.

This sequence belongs to the MOS2 family. Component of the minor spliceosome, which splices U12-type introns. Interacts with PRKX, PRKACB and DHX16. Post-translationally, phosphorylation regulates its ability to bind RNA.

The protein localises to the nucleus. Functionally, RNA-binding protein involved in pre-mRNA splicing. As a component of the minor spliceosome, involved in the splicing of U12-type introns in pre-mRNAs. This is G-patch domain and KOW motifs-containing protein (Gpkow) from Mus musculus (Mouse).